The primary structure comprises 374 residues: Palmitoyltransferase PFA5 (374 aa).

Over 1–13 (MALSWNIRIRRRS) the chain is Cytoplasmic. A helical membrane pass occupies residues 14-34 (WFRFILPIIVLGLLCYGTWAY). Topologically, residues 35 to 55 (CHKLCYEQVDKRLRQKSVSVG) are lumenal. A helical transmembrane segment spans residues 56–76 (LICAVCFLDVVVIFIWLQIVI). At 77 to 173 (LVGPGTQPHV…TVIGRDNYRL (97 aa)) the chain is on the cytoplasmic side. The DHHC domain occupies 129–179 (IWCSECQSLKMERTHHSSELGHCIPRFDHYCMWIGTVIGRDNYRLFVQFAA). Residues 174–194 (FVQFAAYFSTLLLIMWVSICV) form a helical membrane-spanning segment. The Lumenal segment spans residues 195-217 (YIRIITQHNHNYSPNLNANIIST). Residues 218–238 (LVFAILGWLLTASLLASSIFY) form a helical membrane-spanning segment. Residues 239-374 (MSQNKTSLEA…ASGDDSDPAY (136 aa)) are Cytoplasmic-facing.

The protein belongs to the DHHC palmitoyltransferase family. PFA5 subfamily. Post-translationally, autopalmitoylated.

It localises to the membrane. The enzyme catalyses L-cysteinyl-[protein] + hexadecanoyl-CoA = S-hexadecanoyl-L-cysteinyl-[protein] + CoA. This Saccharomyces cerevisiae (strain ATCC 204508 / S288c) (Baker's yeast) protein is Palmitoyltransferase PFA5 (PFA5).